A 390-amino-acid polypeptide reads, in one-letter code: Tumor susceptibility gene 101 protein (390 aa).

Ala-2 carries the N-acetylalanine modification. One can recognise a UEV domain in the interval Ala-2–Pro-145. The interaction with CEP55 stretch occupies residues Pro-158–Ser-162. Polar residues predominate over residues Ala-198–Gly-214. The disordered stretch occupies residues Ala-198–Thr-220. Phosphothreonine is present on Thr-220. The stretch at Ser-235 to Glu-316 forms a coiled coil. The PTAP motif motif lies at Pro-320–Pro-323. The region spanning Ala-322–Tyr-390 is the SB domain.

Belongs to the ubiquitin-conjugating enzyme family. UEV subfamily. As to quaternary structure, component of the ESCRT-I complex (endosomal sorting complex required for transport I) which consists of TSG101, VPS28, a VPS37 protein (VPS37A to -D) and MVB12A or MVB12B in a 1:1:1:1 stoichiometry. Interacts with VPS37A, VPS37B and VPS37C. Interacts with DMAP1. Interacts with ubiquitin. Interacts with stathmin, GMCL and AATF. Component of an ESCRT-I complex (endosomal sorting complex required for transport I) which consists of TSG101, VPS28, VPS37A and UBAP1 in a 1:1:1:1 stoichiometry. Interacts with HGS; the interaction mediates the association with the ESCRT-0 complex. Interacts with GGA1 and GGA3. Interacts (via UEV domain) with PDCD6IP/AIP1. Interacts with VPS28, SNF8 and VPS36. Self-associates. Interacts with MVB12A; the association appears to be mediated by the TSG101-VPS37 binary subcomplex. Interacts with VPS37D. Interacts with LRSAM1. Interacts with CEP55; the interaction is required for cytokinesis but not for viral budding. Interacts with PDCD6. Interacts with LITAF. Interacts with MGRN1. Interacts with ARRDC1; recruits TSG101 to the plasma membrane. (Microbial infection) Interacts with HIV-1 p6. In terms of assembly, (Microbial infection) Interacts with human spumavirus Gag. As to quaternary structure, (Microbial infection) Interacts with HTLV-1 Gag. (Microbial infection) Interacts with Ebola virus VP40. In terms of assembly, (Microbial infection) Interacts with EIAV p9; the interaction has been shown in vitro. As to quaternary structure, (Microbial infection) Interacts with Lassa virus protein Z. (Microbial infection) Interacts with hepatitis E virus protein ORF3. In terms of processing, monoubiquitinated at multiple sites by LRSAM1 and by MGRN1. Ubiquitination inactivates it, possibly by regulating its shuttling between an active membrane-bound protein and an inactive soluble form. Ubiquitination by MGRN1 requires the presence of UBE2D1. As to expression, heart, brain, placenta, lung, liver, skeletal, kidney and pancreas.

The protein resides in the cytoplasm. Its subcellular location is the early endosome membrane. The protein localises to the late endosome membrane. It is found in the cytoskeleton. It localises to the microtubule organizing center. The protein resides in the centrosome. Its subcellular location is the midbody. The protein localises to the midbody ring. It is found in the nucleus. Component of the ESCRT-I complex, a regulator of vesicular trafficking process. Binds to ubiquitinated cargo proteins and is required for the sorting of endocytic ubiquitinated cargos into multivesicular bodies (MVBs). Mediates the association between the ESCRT-0 and ESCRT-I complex. Required for completion of cytokinesis; the function requires CEP55. May be involved in cell growth and differentiation. Acts as a negative growth regulator. Involved in the budding of many viruses through an interaction with viral proteins that contain a late-budding motif P-[ST]-A-P. This interaction is essential for viral particle budding of numerous retroviruses. Required for the exosomal release of SDCBP, CD63 and syndecan. It may also play a role in the extracellular release of microvesicles that differ from the exosomes. The chain is Tumor susceptibility gene 101 protein (TSG101) from Homo sapiens (Human).